The primary structure comprises 452 residues: Gamma conglutin 1 (452 aa).

The first 33 residues, 1-33, serve as a signal peptide directing secretion; that stretch reads MAKNMAPILHILVISLSYSFLFVTSSSQNSQSL. A Peptidase A1 domain is found at 61-432; that stretch reads HWGNILKRTP…DLARSRVGFN (372 aa). 5 disulfides stabilise this stretch: cysteine 89-cysteine 179, cysteine 103-cysteine 116, cysteine 108-cysteine 134, cysteine 119-cysteine 129, and cysteine 353-cysteine 394. N-linked (GlcNAc...) asparagine glycosylation occurs at asparagine 131.

It belongs to the peptidase A1 family. Two-subunit monomeric unit made of alpha and beta subunits coupled by disulfide bonds (at pH 4.5 and under non-reducing conditions). Monomeric alpha and beta subunits in reducing conditions. Can also form oligomers including dimer, tetramer and cyclic hexamer (trimer of dimers) (at pH &gt; 5.5). Component of globulins complexes which accumulate in seeds. Interacts with flavonoids (e.g. apigenin glucosides) present in globulins complexes. In terms of processing, glycosylated on alpha chain at Asn-131; identified N-glycans bound are Man(2)(Xyl)(Fuc)GlcNAc(2), Man(3)(Xyl)(Fuc)GlcNAc(2), GlcNAcMan(3)(Xyl)(Fuc)GlcNAc(2) and GlcNAc(2)Man(3)(Xyl)(Fuc)GlcNAc(2). In terms of tissue distribution, expressed in developing seeds and in the young roots and cotyledons of germinating seeds and young seedlings.

The protein resides in the secreted. It is found in the extracellular space. Functionally, sulfur-rich seed storage protein that remains undegraded at germination. The uncleaved form exhibits some inhibitory activity against GH11 xylanase from T.longibrachiatum, more at pH 7 than at pH 5.3, but not against GH12 xyloglucan-specific endoglucanase (XEG) from A.aculeatus. Binds to model phospholipid membranes containing dimyristoyl phosphatidylglycerol (DMPG), dioleoyl phosphatidic acid (DOPA) or mixture of dimyristoyl phosphatidylcholine and dimyristoyl phosphatidylglycerol (DMPC:DMPG), or mixture of dioleoyl phosphatidic acid and dioleoyl phosphatidylcholine (DOPC:DOPA). The polypeptide is Gamma conglutin 1 (Lupinus albus (White lupine)).